The sequence spans 653 residues: Sodium-dependent phosphate transporter 2 (653 aa).

Residue Met-1 is a topological domain, extracellular. Residues 2–22 (VLVEYLWMVIVGFIIAFILAF) form a helical membrane-spanning segment. The Cytoplasmic segment spans residues 23–46 (SVGANDVANSFGTAVGSGVVTLRQ). The helical transmembrane segment at 47 to 67 (ACILASIFETTGSVLLGAKVG) threads the bilayer. At 68–86 (ETIRKGIIDVNLYNNTVDL) the chain is on the extracellular side. Residue Asn-81 is glycosylated (N-linked (GlcNAc...) asparagine). The helical transmembrane segment at 87-107 (LMAGEVSAMVGSAVWQLIASF) threads the bilayer. Residues 108 to 109 (LR) are Cytoplasmic-facing. The chain crosses the membrane as a helical span at residues 110 to 130 (LPISGTHCIVGATIGFSLVAI). The Extracellular portion of the chain corresponds to 131–142 (GTHGVQWMQLVK). Residues 143–163 (IVASWFISPLLSGLMSGALFL) traverse the membrane as a helical segment. The Cytoplasmic portion of the chain corresponds to 164 to 187 (MIKFFILKKEDPVPNGLKALPVFY). The helical transmembrane segment at 188–208 (AATIGINVFSILYTGAPLLGL) threads the bilayer. The Extracellular portion of the chain corresponds to 209-217 (ESFPVWATA). Residues 218–238 (LLSIGIAIIFALIVWFFVCPW) traverse the membrane as a helical segment. The Cytoplasmic segment spans residues 239-483 (MKKKIASRLK…EDKEEKDKSE (245 aa)). A helical transmembrane segment spans residues 484–504 (VHLLFHFLQILTACFGSFAHG). The Extracellular segment spans residues 505–532 (GNDVSNAIGPLVALWLIYEQGGVMQEAS). Residues 533 to 553 (TPVWLLLYGGVGICAGLWVWG) traverse the membrane as a helical segment. Topologically, residues 554–572 (RRVIQTMGKDLTPITPSSG) are cytoplasmic. Residues 573–587 (FTIELASAFTVVVAS) form a helical membrane-spanning segment. The Extracellular portion of the chain corresponds to 588 to 594 (NIGLPIS). Residues 595 to 610 (TTHCKVGSVVAVGWIR) form a helical membrane-spanning segment. The Cytoplasmic segment spans residues 611-622 (SRKAVDWRLFRN). Residues 623–643 (IFLAWFVTVPVAGLFSAGVMA) form a helical membrane-spanning segment. At 644–653 (ILQYGILPYV) the chain is on the extracellular side.

The protein belongs to the inorganic phosphate transporter (PiT) (TC 2.A.20) family. As to quaternary structure, homodimer.

It localises to the cell membrane. The protein resides in the apical cell membrane. It catalyses the reaction 2 Na(+)(out) + phosphate(out) = 2 Na(+)(in) + phosphate(in). Functionally, sodium-phosphate symporter which preferentially transports the monovalent form of phosphate with a stoichiometry of two sodium ions per phosphate ion. The sequence is that of Sodium-dependent phosphate transporter 2 (slc20a2) from Xenopus tropicalis (Western clawed frog).